A 430-amino-acid chain; its full sequence is Enolase (430 aa).

(2R)-2-phosphoglycerate is bound at residue Gln-165. Glu-207 functions as the Proton donor in the catalytic mechanism. Mg(2+) is bound by residues Asp-244, Glu-287, and Asp-314. (2R)-2-phosphoglycerate is bound by residues Lys-339, Arg-368, Ser-369, and Lys-390. Residue Lys-339 is the Proton acceptor of the active site.

The protein belongs to the enolase family. Component of the RNA degradosome, a multiprotein complex involved in RNA processing and mRNA degradation. The cofactor is Mg(2+).

It localises to the cytoplasm. The protein resides in the secreted. Its subcellular location is the cell surface. The catalysed reaction is (2R)-2-phosphoglycerate = phosphoenolpyruvate + H2O. Its pathway is carbohydrate degradation; glycolysis; pyruvate from D-glyceraldehyde 3-phosphate: step 4/5. Functionally, catalyzes the reversible conversion of 2-phosphoglycerate (2-PG) into phosphoenolpyruvate (PEP). It is essential for the degradation of carbohydrates via glycolysis. This is Enolase from Xanthomonas euvesicatoria pv. vesicatoria (strain 85-10) (Xanthomonas campestris pv. vesicatoria).